The sequence spans 203 residues: Small ribosomal subunit protein uS4 (203 aa).

An S4 RNA-binding domain is found at 93-153 (QRLDSLVYRL…DKSKNIVPIQ (61 aa)).

Belongs to the universal ribosomal protein uS4 family. In terms of assembly, part of the 30S ribosomal subunit. Contacts protein S5. The interaction surface between S4 and S5 is involved in control of translational fidelity.

In terms of biological role, one of the primary rRNA binding proteins, it binds directly to 16S rRNA where it nucleates assembly of the body of the 30S subunit. Its function is as follows. With S5 and S12 plays an important role in translational accuracy. This is Small ribosomal subunit protein uS4 from Leuconostoc citreum (strain KM20).